A 178-amino-acid polypeptide reads, in one-letter code: High mobility group B protein 1 (178 aa).

2 stretches are compositionally biased toward basic and acidic residues: residues 1 to 52 (MKTA…DPNK) and 101 to 118 (APYE…EKQM). 2 disordered regions span residues 1 to 59 (MKTA…APSA) and 75 to 178 (NPNV…EEED). The HMG box DNA-binding region spans 53–122 (PKRAPSAFFV…EYEKQMDAYN (70 aa)). Residues Ser137 and Ser146 each carry the phosphoserine modification. A compositionally biased stretch (acidic residues) spans 140–178 (NDEDEASGEEELLEKEAAGDDEEEEEEEDDDDDDDEEED).

Belongs to the HMGB family. Expressed in cotyledons, roots, stems, leaves and flowers (excluding pedicels).

The protein resides in the nucleus. Binds preferentially double-stranded DNA. Modulates general plant growth and stress tolerance. Confers sensitivity to salt and genotoxic (methyl methanesulfonate, MMS) stresses. The protein is High mobility group B protein 1 (HMGB1) of Arabidopsis thaliana (Mouse-ear cress).